Reading from the N-terminus, the 300-residue chain is 2-oxoglutarate-dependent dioxygenase DAO (300 aa).

One can recognise a Fe2OG dioxygenase domain in the interval 149–252; sequence WPCQFRMNRY…VSIAMFLLAP (104 aa). Fe cation contacts are provided by histidine 173, aspartate 175, and histidine 232. Arginine 242 provides a ligand contact to 2-oxoglutarate.

The protein belongs to the iron/ascorbate-dependent oxidoreductase family. Requires Fe(2+) as cofactor.

Its function is as follows. 2-oxoglutarate-dependent dioxygenase essential for auxin catabolism and maintenance of auxin homeostasis in reproductive organs. Catalyzes the irreversible oxidation of indole-3-acetic acid (IAA) to the biologically inactive 2-oxoindole-3-acetic acid (OxIAA). This is 2-oxoglutarate-dependent dioxygenase DAO (DAO) from Oryza sativa subsp. indica (Rice).